The chain runs to 572 residues: Putative two-component response regulator ARR13 (572 aa).

The Response regulatory domain maps to 17 to 134 (NVMVVDDNRV…DLPKIYQFAL (118 aa)). Asp-71 bears the 4-aspartylphosphate mark. Residues 175–225 (KKNCSSKSDTRTVNSTNVSHVSTNGSRKNRKRKPKGGPSDDGESLSQPPKK) form a disordered region. Residues 179–197 (SSKSDTRTVNSTNVSHVST) show a composition bias toward polar residues. The Nuclear localization signal signature appears at 224–227 (KKKK). A DNA-binding region (myb-like GARP) is located at residues 227–277 (KIWWTNPLQDLFLQAIQHIGYDKVVPKKILAIMNVPYLTRENVASHLQKYR). Polar residues predominate over residues 509 to 522 (NQDQSNGESSNTIA). The interval 509–531 (NQDQSNGESSNTIATPETNTPNF) is disordered.

It belongs to the ARR family. Type-B subfamily. In terms of assembly, binds the target DNA as a monomer. Post-translationally, two-component system major event consists of a His-to-Asp phosphorelay between a sensor histidine kinase (HK) and a response regulator (RR). In plants, the His-to-Asp phosphorelay involves an additional intermediate named Histidine-containing phosphotransfer protein (HPt). This multistep phosphorelay consists of a His-Asp-His-Asp sequential transfer of a phosphate group between first a His and an Asp of the HK protein, followed by the transfer to a conserved His of the HPt protein and finally the transfer to an Asp in the receiver domain of the RR protein.

It localises to the nucleus. Its function is as follows. Putative transcriptional activator that binds specifically to the DNA sequence 5'-[AG]GATT-3'. Functions as a response regulator involved in His-to-Asp phosphorelay signal transduction system. Phosphorylation of the Asp residue in the receiver domain activates the ability of the protein to promote the transcription of target genes. Could directly activate some type-A response regulators in response to cytokinins. This chain is Putative two-component response regulator ARR13 (ARR13), found in Arabidopsis thaliana (Mouse-ear cress).